We begin with the raw amino-acid sequence, 356 residues long: MVPPTAVAEGSAVAIKDPVKDTILTPRFYTTDFEAMAAMDLQPNEAELEAICEEFRKDYNRHHFVRNEEFEGAADKLDPETRKVFIEFLEQSCTSEFSGFLLYKELSRRIKAKNPLLAECFAHMARDEARHAGFLNKSMSDFGMQLDLGFLTANKDYTFFKPKFIFYATYLSEKIGYWRYIAIYRHLEKNPDSKIFPIFNFFENWCQDENRHGDFFDALMKAQPDTVRGPIAKLWCRFFLLAVFATMYVRDVARKEFYEALGLDARTYDKMVIEKTNETSARVFPVVLDVNNDKFWTRLERLVANNAALDKADASDAIAPVKLLRKLPFWIGNGAEMAKLFLMPAIDSDRFQPAVR.

The protein belongs to the AcsF family. It depends on Fe cation as a cofactor.

It catalyses the reaction Mg-protoporphyrin IX 13-monomethyl ester + 3 NADPH + 3 O2 + 2 H(+) = 3,8-divinyl protochlorophyllide a + 3 NADP(+) + 5 H2O. It functions in the pathway porphyrin-containing compound metabolism; chlorophyll biosynthesis (light-independent). Functionally, catalyzes the formation of the isocyclic ring in chlorophyll biosynthesis. Mediates the cyclase reaction, which results in the formation of divinylprotochlorophyllide (Pchlide) characteristic of all chlorophylls from magnesium-protoporphyrin IX 13-monomethyl ester (MgPMME). The protein is Magnesium-protoporphyrin IX monomethyl ester [oxidative] cyclase of Synechococcus sp. (strain CC9605).